The primary structure comprises 254 residues: D-aminoacyl-tRNA deacylase (254 aa).

The disordered stretch occupies residues 61 to 85 (KPTLTVHTPGNLTEDNSRGGNSEEI). Residues 65–84 (TVHTPGNLTEDNSRGGNSEE) show a composition bias toward polar residues.

The protein belongs to the DtdA deacylase family. As to quaternary structure, monomer. The cofactor is Zn(2+).

The enzyme catalyses a D-aminoacyl-tRNA + H2O = a tRNA + a D-alpha-amino acid + H(+). The catalysed reaction is glycyl-tRNA(Ala) + H2O = tRNA(Ala) + glycine + H(+). D-aminoacyl-tRNA deacylase with broad substrate specificity. By recycling D-aminoacyl-tRNA to D-amino acids and free tRNA molecules, this enzyme counteracts the toxicity associated with the formation of D-aminoacyl-tRNA entities in vivo. The polypeptide is D-aminoacyl-tRNA deacylase (Methanococcus maripaludis (strain C5 / ATCC BAA-1333)).